A 396-amino-acid polypeptide reads, in one-letter code: General transcription factor IIH subunit 2 (396 aa).

The 177-residue stretch at 60–236 (HLYVVVDGSR…HYKELLARHV (177 aa)) folds into the VWFA domain. Phosphotyrosine is present on Y95. The C4-type zinc-finger motif lies at 292–309 (CPQCRAKYCELPVECKIC).

This sequence belongs to the GTF2H2 family. Component of the TFIID-containing RNA polymerase II pre-initiation complex that is composed of TBP and at least GTF2A1, GTF2A2, GTF2E1, GTF2E2, GTF2F1, GTF2H2, GTF2H3, GTF2H4, GTF2H5, GTF2B, TCEA1, ERCC2 and ERCC3. Component of the 7-subunit TFIIH core complex composed of XPB/ERCC3, XPD/ERCC2, GTF2H1, GTF2H2, GTF2H3, GTF2H4 and GTF2H5, which is active in NER. The core complex associates with the 3-subunit CDK-activating kinase (CAK) module composed of CCNH/cyclin H, CDK7 and MNAT1 to form the 10-subunit holoenzyme (holo-TFIIH) active in transcription. Interacts with XPB, XPD, GTF2H1 and GTF2H3.

The protein localises to the nucleus. Its function is as follows. Component of the general transcription and DNA repair factor IIH (TFIIH) core complex, which is involved in general and transcription-coupled nucleotide excision repair (NER) of damaged DNA and, when complexed to CAK, in RNA transcription by RNA polymerase II. In NER, TFIIH acts by opening DNA around the lesion to allow the excision of the damaged oligonucleotide and its replacement by a new DNA fragment. In transcription, TFIIH has an essential role in transcription initiation. When the pre-initiation complex (PIC) has been established, TFIIH is required for promoter opening and promoter escape. Phosphorylation of the C-terminal tail (CTD) of the largest subunit of RNA polymerase II by the kinase module CAK controls the initiation of transcription. The N-terminus of GTF2H2 interacts with and regulates XPD whereas an intact C-terminus is required for a successful escape of RNAP II form the promoter. The protein is General transcription factor IIH subunit 2 (Gtf2h2) of Rattus norvegicus (Rat).